The following is a 550-amino-acid chain: Chaperonin GroEL 2 (550 aa).

Residues 30-33 (TLGP), Lys51, 87-91 (DGTTT), Gly415, and Asp496 each bind ATP.

This sequence belongs to the chaperonin (HSP60) family. Forms a cylinder of 14 subunits composed of two heptameric rings stacked back-to-back. Interacts with the co-chaperonin GroES.

It localises to the cytoplasm. It catalyses the reaction ATP + H2O + a folded polypeptide = ADP + phosphate + an unfolded polypeptide.. Its function is as follows. Together with its co-chaperonin GroES, plays an essential role in assisting protein folding. The GroEL-GroES system forms a nano-cage that allows encapsulation of the non-native substrate proteins and provides a physical environment optimized to promote and accelerate protein folding. The chain is Chaperonin GroEL 2 from Bradyrhizobium diazoefficiens (strain JCM 10833 / BCRC 13528 / IAM 13628 / NBRC 14792 / USDA 110).